Here is a 68-residue protein sequence, read N- to C-terminus: Large ribosomal subunit protein uL29 (68 aa).

It belongs to the universal ribosomal protein uL29 family.

In Chlorobaculum tepidum (strain ATCC 49652 / DSM 12025 / NBRC 103806 / TLS) (Chlorobium tepidum), this protein is Large ribosomal subunit protein uL29.